Here is a 217-residue protein sequence, read N- to C-terminus: Cytidylate kinase (217 aa).

9 to 17 (GPSSSGKSS) is a binding site for ATP.

It belongs to the cytidylate kinase family. Type 1 subfamily.

It localises to the cytoplasm. It catalyses the reaction CMP + ATP = CDP + ADP. It carries out the reaction dCMP + ATP = dCDP + ADP. This chain is Cytidylate kinase, found in Mycoplasma genitalium (strain ATCC 33530 / DSM 19775 / NCTC 10195 / G37) (Mycoplasmoides genitalium).